The sequence spans 36 residues: Photosystem I reaction center subunit VIII (36 aa).

The helical transmembrane segment at 6–28 (FPSVLVPLVGLVFPAMAMASLSL) threads the bilayer.

The protein belongs to the PsaI family.

It is found in the plastid. Its subcellular location is the chloroplast thylakoid membrane. In terms of biological role, may help in the organization of the PsaL subunit. The polypeptide is Photosystem I reaction center subunit VIII (Panax ginseng (Korean ginseng)).